The following is a 469-amino-acid chain: 24-hydroxycholesterol 7-alpha-hydroxylase (469 aa).

Residues 1–23 (MELISPTVIIILGCLALFLLLQR) form the signal peptide. Helical transmembrane passes span 267-287 (GLLL…WTLA), 352-372 (VEIL…PFWL), and 412-432 (FQCP…ILIL). Cys414 contacts heme.

It belongs to the cytochrome P450 family. Heme is required as a cofactor. Liver specific.

It is found in the endoplasmic reticulum membrane. The protein localises to the microsome membrane. It carries out the reaction (24S)-hydroxycholesterol + reduced [NADPH--hemoprotein reductase] + O2 = (24S)-7alpha-dihydroxycholesterol + oxidized [NADPH--hemoprotein reductase] + H2O + H(+). It participates in steroid metabolism; cholesterol degradation. It functions in the pathway lipid metabolism; bile acid biosynthesis. In terms of biological role, a cytochrome P450 monooxygenase involved in neural cholesterol clearance through bile acid synthesis. Catalyzes 7-alpha hydroxylation of (24S)-hydroxycholesterol, a neural oxysterol that is metabolized to bile acids in the liver. Mechanistically, uses molecular oxygen inserting one oxygen atom into a substrate, and reducing the second into a water molecule, with two electrons provided by NADPH via cytochrome P450 reductase (CPR; NADPH-ferrihemoprotein reductase). This is 24-hydroxycholesterol 7-alpha-hydroxylase from Homo sapiens (Human).